The sequence spans 97 residues: Aspartyl/glutamyl-tRNA(Asn/Gln) amidotransferase subunit C (97 aa).

Belongs to the GatC family. In terms of assembly, heterotrimer of A, B and C subunits.

It carries out the reaction L-glutamyl-tRNA(Gln) + L-glutamine + ATP + H2O = L-glutaminyl-tRNA(Gln) + L-glutamate + ADP + phosphate + H(+). It catalyses the reaction L-aspartyl-tRNA(Asn) + L-glutamine + ATP + H2O = L-asparaginyl-tRNA(Asn) + L-glutamate + ADP + phosphate + 2 H(+). Allows the formation of correctly charged Asn-tRNA(Asn) or Gln-tRNA(Gln) through the transamidation of misacylated Asp-tRNA(Asn) or Glu-tRNA(Gln) in organisms which lack either or both of asparaginyl-tRNA or glutaminyl-tRNA synthetases. The reaction takes place in the presence of glutamine and ATP through an activated phospho-Asp-tRNA(Asn) or phospho-Glu-tRNA(Gln). In Cyanothece sp. (strain PCC 7425 / ATCC 29141), this protein is Aspartyl/glutamyl-tRNA(Asn/Gln) amidotransferase subunit C.